A 419-amino-acid chain; its full sequence is Serine hydroxymethyltransferase (419 aa).

Residues leucine 121 and glycine 125–leucine 127 contribute to the (6S)-5,6,7,8-tetrahydrofolate site. Lysine 230 bears the N6-(pyridoxal phosphate)lysine mark. Serine 355 to phenylalanine 357 provides a ligand contact to (6S)-5,6,7,8-tetrahydrofolate.

It belongs to the SHMT family. As to quaternary structure, homodimer. Pyridoxal 5'-phosphate serves as cofactor.

Its subcellular location is the cytoplasm. The catalysed reaction is (6R)-5,10-methylene-5,6,7,8-tetrahydrofolate + glycine + H2O = (6S)-5,6,7,8-tetrahydrofolate + L-serine. It functions in the pathway one-carbon metabolism; tetrahydrofolate interconversion. It participates in amino-acid biosynthesis; glycine biosynthesis; glycine from L-serine: step 1/1. Its function is as follows. Catalyzes the reversible interconversion of serine and glycine with tetrahydrofolate (THF) serving as the one-carbon carrier. This reaction serves as the major source of one-carbon groups required for the biosynthesis of purines, thymidylate, methionine, and other important biomolecules. Also exhibits THF-independent aldolase activity toward beta-hydroxyamino acids, producing glycine and aldehydes, via a retro-aldol mechanism. The protein is Serine hydroxymethyltransferase of Streptococcus equi subsp. equi (strain 4047).